We begin with the raw amino-acid sequence, 202 residues long: Imidazoleglycerol-phosphate dehydratase (202 aa).

Belongs to the imidazoleglycerol-phosphate dehydratase family.

Its subcellular location is the cytoplasm. It catalyses the reaction D-erythro-1-(imidazol-4-yl)glycerol 3-phosphate = 3-(imidazol-4-yl)-2-oxopropyl phosphate + H2O. Its pathway is amino-acid biosynthesis; L-histidine biosynthesis; L-histidine from 5-phospho-alpha-D-ribose 1-diphosphate: step 6/9. The polypeptide is Imidazoleglycerol-phosphate dehydratase (Sinorhizobium medicae (strain WSM419) (Ensifer medicae)).